Consider the following 334-residue polypeptide: tRNA-cytidine(32) 2-sulfurtransferase (334 aa).

Residues 74–79 (SGGKDS) carry the PP-loop motif motif. [4Fe-4S] cluster-binding residues include Cys-149, Cys-152, and Cys-240.

This sequence belongs to the TtcA family. As to quaternary structure, homodimer. Mg(2+) serves as cofactor. The cofactor is [4Fe-4S] cluster.

Its subcellular location is the cytoplasm. The enzyme catalyses cytidine(32) in tRNA + S-sulfanyl-L-cysteinyl-[cysteine desulfurase] + AH2 + ATP = 2-thiocytidine(32) in tRNA + L-cysteinyl-[cysteine desulfurase] + A + AMP + diphosphate + H(+). It functions in the pathway tRNA modification. Catalyzes the ATP-dependent 2-thiolation of cytidine in position 32 of tRNA, to form 2-thiocytidine (s(2)C32). The sulfur atoms are provided by the cysteine/cysteine desulfurase (IscS) system. The protein is tRNA-cytidine(32) 2-sulfurtransferase of Burkholderia ambifaria (strain ATCC BAA-244 / DSM 16087 / CCUG 44356 / LMG 19182 / AMMD) (Burkholderia cepacia (strain AMMD)).